Here is a 271-residue protein sequence, read N- to C-terminus: Aminoglycoside N(3)-acetyltransferase III (271 aa).

His-31, Ala-32, Ser-33, Val-34, and Lys-35 together coordinate CoA. The a 2-deoxystreptamine antibiotic site is built by Tyr-64, Asp-72, and Glu-102. CoA contacts are provided by Ser-104, Val-105, and Phe-109. A 2-deoxystreptamine antibiotic contacts are provided by Glu-123, Tyr-146, and Asp-170. CoA is bound by residues Thr-171 and Thr-173. A 2-deoxystreptamine antibiotic is bound by residues His-176, Thr-212, Gly-213, and Phe-221.

It belongs to the antibiotic N-acetyltransferase family. Homodimer.

The catalysed reaction is a 2-deoxystreptamine antibiotic + acetyl-CoA = an N(3)-acetyl-2-deoxystreptamine antibiotic + CoA + H(+). Resistance to antibiotics containing the 2-deoxy-streptamine ring including dibekacin, gentamicin, kanamycin, sisomicin, tobramycin and neomycin, but not to amikacin or netilmicin. Acetylates a broad range of both 4,5- and 4,6-disubstituted aminoglycosides, including neomycin, paromomycin, ribostamycin, sisomicin, gentamicin, tobramycin and kanamycin, with no preference of one disubstitution over the other. Acetylates sisomicin and kanamycin most and least efficiently, respectively. Does not modify plazomicin. The sequence is that of Aminoglycoside N(3)-acetyltransferase III from Pseudomonas aeruginosa.